A 289-amino-acid chain; its full sequence is Undecaprenyl-diphosphatase (289 aa).

8 helical membrane-spanning segments follow: residues 23-43 (LFLG…TAHL), 56-76 (GVAV…AYFW), 104-124 (SAIV…KLFW), 135-155 (IPAI…AENV), 165-185 (LSFW…IPGV), 210-230 (FLLG…QAFG), 235-255 (VDVF…WIAI), and 269-289 (IFIT…YLAF).

The protein belongs to the UppP family.

It is found in the cell inner membrane. It carries out the reaction di-trans,octa-cis-undecaprenyl diphosphate + H2O = di-trans,octa-cis-undecaprenyl phosphate + phosphate + H(+). Catalyzes the dephosphorylation of undecaprenyl diphosphate (UPP). Confers resistance to bacitracin. This Prochlorococcus marinus (strain SARG / CCMP1375 / SS120) protein is Undecaprenyl-diphosphatase.